Consider the following 540-residue polypeptide: 2,3-bisphosphoglycerate-independent phosphoglycerate mutase (540 aa).

Mn(2+) contacts are provided by Asp13 and Ser63. Ser63 acts as the Phosphoserine intermediate in catalysis. Residues His124, 154–155 (RD), Arg186, Arg192, 262–265 (RPDR), and Lys356 each bind substrate. The Mn(2+) site is built by Asp423, His427, Asp464, His465, and His483.

This sequence belongs to the BPG-independent phosphoglycerate mutase family. In terms of assembly, monomer. Mn(2+) is required as a cofactor.

The catalysed reaction is (2R)-2-phosphoglycerate = (2R)-3-phosphoglycerate. Its pathway is carbohydrate degradation; glycolysis; pyruvate from D-glyceraldehyde 3-phosphate: step 3/5. Functionally, catalyzes the interconversion of 2-phosphoglycerate and 3-phosphoglycerate. The chain is 2,3-bisphosphoglycerate-independent phosphoglycerate mutase from Chloroflexus aggregans (strain MD-66 / DSM 9485).